Consider the following 75-residue polypeptide: Putative membrane protein insertion efficiency factor (75 aa).

The protein belongs to the UPF0161 family.

It is found in the cell membrane. In terms of biological role, could be involved in insertion of integral membrane proteins into the membrane. The sequence is that of Putative membrane protein insertion efficiency factor (ytjA) from Bacillus subtilis (strain 168).